The sequence spans 270 residues: Ribosomal RNA small subunit methyltransferase A (270 aa).

The S-adenosyl-L-methionine site is built by Asn15, Ile17, Gly42, Glu64, Asp89, and Asn108.

Belongs to the class I-like SAM-binding methyltransferase superfamily. rRNA adenine N(6)-methyltransferase family. RsmA subfamily.

It localises to the cytoplasm. The enzyme catalyses adenosine(1518)/adenosine(1519) in 16S rRNA + 4 S-adenosyl-L-methionine = N(6)-dimethyladenosine(1518)/N(6)-dimethyladenosine(1519) in 16S rRNA + 4 S-adenosyl-L-homocysteine + 4 H(+). Specifically dimethylates two adjacent adenosines (A1518 and A1519) in the loop of a conserved hairpin near the 3'-end of 16S rRNA in the 30S particle. May play a critical role in biogenesis of 30S subunits. This Anaplasma marginale (strain Florida) protein is Ribosomal RNA small subunit methyltransferase A.